The chain runs to 377 residues: Succinyl-diaminopimelate desuccinylase (377 aa).

Residue His-68 coordinates Zn(2+). The active site involves Asp-70. Asp-101 lines the Zn(2+) pocket. Glu-135 functions as the Proton acceptor in the catalytic mechanism. The Zn(2+) site is built by Glu-136, Glu-164, and His-350.

It belongs to the peptidase M20A family. DapE subfamily. Homodimer. It depends on Zn(2+) as a cofactor. Requires Co(2+) as cofactor.

The enzyme catalyses N-succinyl-(2S,6S)-2,6-diaminopimelate + H2O = (2S,6S)-2,6-diaminopimelate + succinate. The protein operates within amino-acid biosynthesis; L-lysine biosynthesis via DAP pathway; LL-2,6-diaminopimelate from (S)-tetrahydrodipicolinate (succinylase route): step 3/3. Functionally, catalyzes the hydrolysis of N-succinyl-L,L-diaminopimelic acid (SDAP), forming succinate and LL-2,6-diaminopimelate (DAP), an intermediate involved in the bacterial biosynthesis of lysine and meso-diaminopimelic acid, an essential component of bacterial cell walls. The chain is Succinyl-diaminopimelate desuccinylase from Acinetobacter baumannii (strain SDF).